The chain runs to 185 residues: Ribosome-recycling factor (185 aa).

It belongs to the RRF family.

The protein localises to the cytoplasm. Functionally, responsible for the release of ribosomes from messenger RNA at the termination of protein biosynthesis. May increase the efficiency of translation by recycling ribosomes from one round of translation to another. The protein is Ribosome-recycling factor of Salmonella arizonae (strain ATCC BAA-731 / CDC346-86 / RSK2980).